Consider the following 312-residue polypeptide: Homoserine O-succinyltransferase (312 aa).

The active-site Acyl-thioester intermediate is C142. 2 residues coordinate substrate: K163 and S192. Catalysis depends on H235, which acts as the Proton acceptor. E237 is an active-site residue. R249 lines the substrate pocket.

The protein belongs to the MetA family.

The protein localises to the cytoplasm. The catalysed reaction is L-homoserine + succinyl-CoA = O-succinyl-L-homoserine + CoA. It participates in amino-acid biosynthesis; L-methionine biosynthesis via de novo pathway; O-succinyl-L-homoserine from L-homoserine: step 1/1. Transfers a succinyl group from succinyl-CoA to L-homoserine, forming succinyl-L-homoserine. In Aliivibrio salmonicida (strain LFI1238) (Vibrio salmonicida (strain LFI1238)), this protein is Homoserine O-succinyltransferase.